The following is a 105-amino-acid chain: Large ribosomal subunit protein uL24 (105 aa).

This sequence belongs to the universal ribosomal protein uL24 family. In terms of assembly, part of the 50S ribosomal subunit.

Functionally, one of two assembly initiator proteins, it binds directly to the 5'-end of the 23S rRNA, where it nucleates assembly of the 50S subunit. In terms of biological role, one of the proteins that surrounds the polypeptide exit tunnel on the outside of the subunit. The sequence is that of Large ribosomal subunit protein uL24 from Aeromonas salmonicida (strain A449).